The sequence spans 273 residues: 2,3,4,5-tetrahydropyridine-2,6-dicarboxylate N-succinyltransferase (273 aa).

The protein belongs to the transferase hexapeptide repeat family.

It localises to the cytoplasm. It carries out the reaction (S)-2,3,4,5-tetrahydrodipicolinate + succinyl-CoA + H2O = (S)-2-succinylamino-6-oxoheptanedioate + CoA. Its pathway is amino-acid biosynthesis; L-lysine biosynthesis via DAP pathway; LL-2,6-diaminopimelate from (S)-tetrahydrodipicolinate (succinylase route): step 1/3. The chain is 2,3,4,5-tetrahydropyridine-2,6-dicarboxylate N-succinyltransferase from Acinetobacter baumannii (strain SDF).